Reading from the N-terminus, the 448-residue chain is N-succinylarginine dihydrolase (448 aa).

Residues 19-28 (GGLSYGNVAS), N110, and 137-138 (HR) each bind substrate. The active site involves E174. Residue R214 coordinates substrate. Residue H250 is part of the active site. Substrate-binding residues include D252 and N365. Catalysis depends on C371, which acts as the Nucleophile.

It belongs to the succinylarginine dihydrolase family. As to quaternary structure, homodimer.

The enzyme catalyses N(2)-succinyl-L-arginine + 2 H2O + 2 H(+) = N(2)-succinyl-L-ornithine + 2 NH4(+) + CO2. Its pathway is amino-acid degradation; L-arginine degradation via AST pathway; L-glutamate and succinate from L-arginine: step 2/5. Catalyzes the hydrolysis of N(2)-succinylarginine into N(2)-succinylornithine, ammonia and CO(2). The polypeptide is N-succinylarginine dihydrolase (Pseudomonas aeruginosa (strain LESB58)).